The sequence spans 117 residues: UPF0251 protein DehaBAV1_0135 (117 aa).

Belongs to the UPF0251 family.

The chain is UPF0251 protein DehaBAV1_0135 from Dehalococcoides mccartyi (strain ATCC BAA-2100 / JCM 16839 / KCTC 5957 / BAV1).